Reading from the N-terminus, the 473-residue chain is Ribonuclease Y (473 aa).

Residues 4–24 (LIAFIILLILFVLLITIVPVV) traverse the membrane as a helical segment. Positions 158–218 (SLFNIDIIDE…IRREIARIVM (61 aa)) constitute a KH domain. The 94-residue stretch at 285 to 378 (ILSHSLEVAE…VKIVDTLSAA (94 aa)) folds into the HD domain.

This sequence belongs to the RNase Y family.

The protein localises to the cell membrane. Its function is as follows. Endoribonuclease that initiates mRNA decay. The sequence is that of Ribonuclease Y from Ureaplasma parvum serovar 3 (strain ATCC 27815 / 27 / NCTC 11736).